A 490-amino-acid chain; its full sequence is Protein nucleotidyltransferase YdiU (490 aa).

8 residues coordinate ATP: Gly89, Gly91, Arg92, Lys112, Asp124, Gly125, Arg175, and Arg182. Asp251 serves as the catalytic Proton acceptor. Mg(2+) contacts are provided by Asn252 and Asp261. An ATP-binding site is contributed by Asp261.

This sequence belongs to the SELO family. Requires Mg(2+) as cofactor. It depends on Mn(2+) as a cofactor.

The enzyme catalyses L-seryl-[protein] + ATP = 3-O-(5'-adenylyl)-L-seryl-[protein] + diphosphate. It catalyses the reaction L-threonyl-[protein] + ATP = 3-O-(5'-adenylyl)-L-threonyl-[protein] + diphosphate. It carries out the reaction L-tyrosyl-[protein] + ATP = O-(5'-adenylyl)-L-tyrosyl-[protein] + diphosphate. The catalysed reaction is L-histidyl-[protein] + UTP = N(tele)-(5'-uridylyl)-L-histidyl-[protein] + diphosphate. The enzyme catalyses L-seryl-[protein] + UTP = O-(5'-uridylyl)-L-seryl-[protein] + diphosphate. It catalyses the reaction L-tyrosyl-[protein] + UTP = O-(5'-uridylyl)-L-tyrosyl-[protein] + diphosphate. In terms of biological role, nucleotidyltransferase involved in the post-translational modification of proteins. It can catalyze the addition of adenosine monophosphate (AMP) or uridine monophosphate (UMP) to a protein, resulting in modifications known as AMPylation and UMPylation. The protein is Protein nucleotidyltransferase YdiU of Vibrio vulnificus (strain YJ016).